Here is a 217-residue protein sequence, read N- to C-terminus: Ependymin (217 aa).

The first 20 residues, 1–20 (MHTVKLLCVVFSCLCAIGWA), serve as a signal peptide directing secretion. N73 and N96 each carry an N-linked (GlcNAc...) asparagine glycan.

This sequence belongs to the ependymin family. As to quaternary structure, forms disulfide-linked dimers. Post-translationally, binds calcium through the terminal sialic acids. EPDs are synthesized in the meninx and secreted in the cerebrospinal fluid.

Its subcellular location is the secreted. Its function is as follows. May play a role in neural plasticity. May be involved during axon regeneration. This chain is Ependymin (epd), found in Danio rerio (Zebrafish).